Consider the following 71-residue polypeptide: MFRRWVIYIIRLYQRWISPLKTMPSCRFYPTCSQYAIDAVGRYGVIKGGFMALKRILKCHPFHPGGYDPVK.

It belongs to the UPF0161 family.

Its subcellular location is the cell membrane. In terms of biological role, could be involved in insertion of integral membrane proteins into the membrane. The protein is Putative membrane protein insertion efficiency factor of Acetivibrio thermocellus (strain ATCC 27405 / DSM 1237 / JCM 9322 / NBRC 103400 / NCIMB 10682 / NRRL B-4536 / VPI 7372) (Clostridium thermocellum).